The sequence spans 158 residues: Dihydroneopterin triphosphate diphosphatase (158 aa).

The substrate site is built by Lys14, Arg36, and Thr47. The Nudix hydrolase domain occupies 14-153 (KNNQSVLVVI…NNAEAIKKYL (140 aa)). A Nudix box motif is present at residues 48–69 (GTIESDETPKKTAIRELWEEVR). 2 residues coordinate Mg(2+): Glu63 and Glu67. 88–91 (FEIF) is a substrate binding site. Glu124 contributes to the Mg(2+) binding site. A substrate-binding site is contributed by Ser142.

This sequence belongs to the Nudix hydrolase family. It depends on Mg(2+) as a cofactor.

It carries out the reaction 7,8-dihydroneopterin 3'-triphosphate + H2O = 7,8-dihydroneopterin 3'-phosphate + diphosphate + H(+). Catalyzes the hydrolysis of dihydroneopterin triphosphate to dihydroneopterin monophosphate and pyrophosphate. Required for efficient folate biosynthesis. Can also hydrolyze nucleoside triphosphates with a preference for dATP. The polypeptide is Dihydroneopterin triphosphate diphosphatase (nudB) (Haemophilus influenzae (strain ATCC 51907 / DSM 11121 / KW20 / Rd)).